Consider the following 90-residue polypeptide: Probable Fe(2+)-trafficking protein (90 aa).

Belongs to the Fe(2+)-trafficking protein family.

In terms of biological role, could be a mediator in iron transactions between iron acquisition and iron-requiring processes, such as synthesis and/or repair of Fe-S clusters in biosynthetic enzymes. This chain is Probable Fe(2+)-trafficking protein, found in Bordetella avium (strain 197N).